A 207-amino-acid chain; its full sequence is Pyrrolidone-carboxylate peptidase (207 aa).

Catalysis depends on residues Glu-80, Cys-143, and His-167.

It belongs to the peptidase C15 family. As to quaternary structure, homotetramer.

Its subcellular location is the cytoplasm. The catalysed reaction is Release of an N-terminal pyroglutamyl group from a polypeptide, the second amino acid generally not being Pro.. Functionally, removes 5-oxoproline from various penultimate amino acid residues except L-proline. The polypeptide is Pyrrolidone-carboxylate peptidase (Coprothermobacter proteolyticus (strain ATCC 35245 / DSM 5265 / OCM 4 / BT)).